The chain runs to 439 residues: MLRFAPSPTGDMHIGNLRAAIFNYIVAKQQHKPFLIRIEDTDKERNIEGKDREILEILKLMGISWDKLVYQSHNIDYHREMAEKLLKENKAFYCYASAEFLEREKEKAKNEKRPFRYLDEWATLEKDKNHAPVVRLKAPNHAVSFNDAIKKEVKFEPDELDSFVLLRQDKSPTYNFACACDDLLYEISLIIRGEDHVSNTPKQILIQQALGLNDPIVYAHLPIILDETSGKKMSKRDEASSVKWLLNQGFLPVAIGNYLITIGNKVPKEVFSLDEAIEWFSLENLSSSPAHFNLKYLKHLNHEHLKLLDDEKLLELTLIKDKNLLGLLRLFIEECGTLLELKEKISLFLEPKDIVKTYENEDFKERCLALFNALKSMDFQAYKDFESFKKEAMRLSQLKGKDFFKPLRILLTGNSHGVELPLIFPYIQSHHQEVLRLKA.

Positions 6–16 (PSPTGDMHIGN) match the 'HIGH' region motif. The short motif at 232 to 236 (KMSKR) is the 'KMSKS' region element. Lys235 serves as a coordination point for ATP.

This sequence belongs to the class-I aminoacyl-tRNA synthetase family. Glutamate--tRNA ligase type 1 subfamily. In terms of assembly, monomer.

It is found in the cytoplasm. It catalyses the reaction tRNA(Glu) + L-glutamate + ATP = L-glutamyl-tRNA(Glu) + AMP + diphosphate. In terms of biological role, catalyzes the attachment of glutamate to tRNA(Glu) in a two-step reaction: glutamate is first activated by ATP to form Glu-AMP and then transferred to the acceptor end of tRNA(Glu). This chain is Glutamate--tRNA ligase 2, found in Helicobacter pylori (strain P12).